We begin with the raw amino-acid sequence, 68 residues long: Peptide TsPep3 (68 aa).

Residues 1 to 26 (MKLSCGFLLIFLVLSAMIATFSEVEA) form the signal peptide. 4 cysteine pairs are disulfide-bonded: C30–C38, C33–C54, C37–C47, and C42–C52. The propeptide occupies 56–68 (GRSDLNEEFENYQ).

As to expression, expressed by the venom gland.

The protein localises to the secreted. In terms of biological role, probable weak potassium channel blocker. In Tityus serrulatus (Brazilian scorpion), this protein is Peptide TsPep3.